The primary structure comprises 140 residues: uncharacterized protein (140 aa).

This is an uncharacterized protein from Acanthamoeba polyphaga mimivirus (APMV).